Consider the following 359-residue polypeptide: Cytoplasmic tRNA 2-thiolation protein 1 (359 aa).

This sequence belongs to the TtcA family. CTU1/NCS6/ATPBD3 subfamily. In terms of assembly, interacts with NCS2 and URM1. May act by forming a heterodimer with NCS2. Component of a large molecular weight complex of more than 250 kDa.

The protein resides in the cytoplasm. The protein localises to the mitochondrion. Its pathway is tRNA modification; 5-methoxycarbonylmethyl-2-thiouridine-tRNA biosynthesis. In terms of biological role, plays a central role in 2-thiolation of mcm(5)S(2)U at tRNA wobble positions of tRNA(Lys), tRNA(Glu) and tRNA(Gln). Directly binds tRNAs and probably acts by catalyzing adenylation of tRNAs, an intermediate required for 2-thiolation. It is unclear whether it acts as a sulfurtransferase that transfers sulfur from thiocarboxylated URM1 onto the uridine of tRNAs at wobble position. Prior mcm(5) tRNA modification by the elongator complex is required for 2-thiolation. May also be involved in protein urmylation. The protein is Cytoplasmic tRNA 2-thiolation protein 1 of Saccharomyces cerevisiae (strain RM11-1a) (Baker's yeast).